The sequence spans 66 residues: ATP synthase F(0) complex subunit 8 (66 aa).

Residues 8 to 24 (TWLTMILSMFLVLFIIF) traverse the membrane as a helical segment. Position 54 is an N6-acetyllysine; alternate (Lys54). The residue at position 54 (Lys54) is an N6-succinyllysine; alternate. Position 57 is an N6-acetyllysine (Lys57).

It belongs to the ATPase protein 8 family. In terms of assembly, component of the ATP synthase complex composed at least of ATP5F1A/subunit alpha, ATP5F1B/subunit beta, ATP5MC1/subunit c (homooctomer), MT-ATP6/subunit a, MT-ATP8/subunit 8, ATP5ME/subunit e, ATP5MF/subunit f, ATP5MG/subunit g, ATP5MK/subunit k, ATP5MJ/subunit j, ATP5F1C/subunit gamma, ATP5F1D/subunit delta, ATP5F1E/subunit epsilon, ATP5PF/subunit F6, ATP5PB/subunit b, ATP5PD/subunit d, ATP5PO/subunit OSCP. ATP synthase complex consists of a soluble F(1) head domain (subunits alpha(3) and beta(3)) - the catalytic core - and a membrane F(0) domain - the membrane proton channel (subunits c, a, 8, e, f, g, k and j). These two domains are linked by a central stalk (subunits gamma, delta, and epsilon) rotating inside the F1 region and a stationary peripheral stalk (subunits F6, b, d, and OSCP). Interacts with PRICKLE3.

The protein localises to the mitochondrion membrane. In terms of biological role, subunit 8, of the mitochondrial membrane ATP synthase complex (F(1)F(0) ATP synthase or Complex V) that produces ATP from ADP in the presence of a proton gradient across the membrane which is generated by electron transport complexes of the respiratory chain. ATP synthase complex consist of a soluble F(1) head domain - the catalytic core - and a membrane F(1) domain - the membrane proton channel. These two domains are linked by a central stalk rotating inside the F(1) region and a stationary peripheral stalk. During catalysis, ATP synthesis in the catalytic domain of F(1) is coupled via a rotary mechanism of the central stalk subunits to proton translocation. In vivo, can only synthesize ATP although its ATP hydrolase activity can be activated artificially in vitro. Part of the complex F(0) domain. The chain is ATP synthase F(0) complex subunit 8 from Ovis aries (Sheep).